Here is a 384-residue protein sequence, read N- to C-terminus: Dual-specificity RNA methyltransferase RlmN (384 aa).

Residue Glu105 is the Proton acceptor of the active site. In terms of domain architecture, Radical SAM core spans 111 to 350 (EDDRATLCVS…TIVRKTRGDD (240 aa)). Cys118 and Cys355 are oxidised to a cystine. 3 residues coordinate [4Fe-4S] cluster: Cys125, Cys129, and Cys132. S-adenosyl-L-methionine contacts are provided by residues 179-180 (GE), Ser211, 233-235 (SLH), and Asn312. Residue Cys355 is the S-methylcysteine intermediate of the active site.

The protein belongs to the radical SAM superfamily. RlmN family. [4Fe-4S] cluster is required as a cofactor.

The protein resides in the cytoplasm. The catalysed reaction is adenosine(2503) in 23S rRNA + 2 reduced [2Fe-2S]-[ferredoxin] + 2 S-adenosyl-L-methionine = 2-methyladenosine(2503) in 23S rRNA + 5'-deoxyadenosine + L-methionine + 2 oxidized [2Fe-2S]-[ferredoxin] + S-adenosyl-L-homocysteine. The enzyme catalyses adenosine(37) in tRNA + 2 reduced [2Fe-2S]-[ferredoxin] + 2 S-adenosyl-L-methionine = 2-methyladenosine(37) in tRNA + 5'-deoxyadenosine + L-methionine + 2 oxidized [2Fe-2S]-[ferredoxin] + S-adenosyl-L-homocysteine. In terms of biological role, specifically methylates position 2 of adenine 2503 in 23S rRNA and position 2 of adenine 37 in tRNAs. m2A2503 modification seems to play a crucial role in the proofreading step occurring at the peptidyl transferase center and thus would serve to optimize ribosomal fidelity. This is Dual-specificity RNA methyltransferase RlmN from Escherichia coli O6:H1 (strain CFT073 / ATCC 700928 / UPEC).